A 381-amino-acid polypeptide reads, in one-letter code: Prokineticin receptor 2 (381 aa).

The Extracellular portion of the chain corresponds to 1-51 (MGPQNRNTSFAPDLNPPQDHVSLNYSYGDYDLPLGEDEDVTKTQTFFAAKI). Residues Asn7 and Asn24 are each glycosylated (N-linked (GlcNAc...) asparagine). A helical membrane pass occupies residues 52 to 72 (VIGVALAGIMLVCGIGNFVFI). Residues 73 to 86 (AALARYKKLRNLTN) lie on the Cytoplasmic side of the membrane. The helical transmembrane segment at 87-107 (LLIANLAISDFLVAIVCCPFE) threads the bilayer. Residues 108–133 (MDYYVVRQLSWAHGHVLCASVNYLRT) are Extracellular-facing. An intrachain disulfide couples Cys125 to Cys205. Residues 134-154 (VSLYVSTNALLAIAIDRYLAI) traverse the membrane as a helical segment. Residues 155–168 (VHPLKPRMNYQTAS) lie on the Cytoplasmic side of the membrane. A helical membrane pass occupies residues 169 to 189 (FLIALVWMVSILIAVPSAYFT). At 190–220 (TETILVIVKNQEKIFCGQIWSVDQQLYYKSY) the chain is on the extracellular side. Residues 221 to 241 (FLFVFGLEFVGPVVTMTLCYA) traverse the membrane as a helical segment. Topologically, residues 242–270 (RISQELWFKAVPGFQTEQIRKRLRCRRKT) are cytoplasmic. Residues 271-291 (VLLLMGILTAYVLCWAPFYGF) form a helical membrane-spanning segment. The Extracellular segment spans residues 292 to 310 (TIVRDFFPTVVVKEKHYLT). The helical transmembrane segment at 311 to 331 (AFYVVECIAMSNSMINTICFV) threads the bilayer. Residues 332–381 (TVKNNTMKYFKKMLRLHWRPSHYGSKSSADLDLKTSGVPATEEVDCIRLK) lie on the Cytoplasmic side of the membrane.

Belongs to the G-protein coupled receptor 1 family. Homodimer. Expressed in several regions of the brain, including paraventricular hypothalamic nucleus, dorsal medial hypothalamic nucleus, paratenial thalamic nuclei, paracentral thalamic nucleus, lateral habenular nucleus, lateral septal nucleus, lateral globus pallidus and amygdala. Highest expression seen in paraventricular thalamic nuclei and is also extensively expressed in the suprachiasmatic nucleus.

It is found in the cell membrane. In terms of biological role, receptor for prokineticin 2. Exclusively coupled to the G(q) subclass of heteromeric G proteins. Activation leads to mobilization of calcium, stimulation of phosphoinositide turnover and activation of p44/p42 mitogen-activated protein kinase. In Mus musculus (Mouse), this protein is Prokineticin receptor 2 (Prokr2).